Reading from the N-terminus, the 354-residue chain is Rhodopsin (354 aa).

At 1–36 the chain is on the extracellular side; the sequence is MNGTEGPDFYVPMVNTTGIVRSPYDYPQYYLVNPAA. Residues N2 and N15 are each glycosylated (N-linked (GlcNAc...) asparagine). A helical membrane pass occupies residues 37–61; it reads FSMLAAYMFFLILVGFPVNFLTLYV. At 62–73 the chain is on the cytoplasmic side; the sequence is TMEHKKLRTPLN. The chain crosses the membrane as a helical span at residues 74–96; it reads YILLNLAVANLFMVIGGFTTTMY. Residues 97 to 110 are Extracellular-facing; sequence TSMHGYFVLGRTGC. C110 and C187 are disulfide-bonded. The chain crosses the membrane as a helical span at residues 111-133; the sequence is NLEGFFATLGGEIALWSLVVLAV. Positions 134 to 136 match the 'Ionic lock' involved in activated form stabilization motif; it reads ERW. Over 134–152 the chain is Cytoplasmic; the sequence is ERWVVVCKPISNFRFGENH. A helical membrane pass occupies residues 153-173; sequence AVMGVSFTWLMACACSVPPLF. The Extracellular portion of the chain corresponds to 174–202; the sequence is GWSRYIPEGMQCSCGIDYYTRAPGYNNES. Residues 203-224 traverse the membrane as a helical segment; sequence FVIYMFVCHFSIPLTIIFFCYG. At 225–252 the chain is on the cytoplasmic side; that stretch reads RLLCAVKDAAAAQQESETTQRAEREVSR. The chain crosses the membrane as a helical span at residues 253–274; it reads MVVIMVIGFLICWLPYASVAWF. Over 275–286 the chain is Extracellular; it reads IFTHQGSEFGPV. A helical membrane pass occupies residues 287–308; that stretch reads FMTIPAFFAKSSAIYNPMIYIC. K296 carries the post-translational modification N6-(retinylidene)lysine. At 309–354 the chain is on the cytoplasmic side; the sequence is MNKQFRHCMITTLCCGKNPFEEEEGASTTASKTEASSVSSSHVSPA. S-palmitoyl cysteine attachment occurs at residues C322 and C323. The interval 333–354 is disordered; that stretch reads GASTTASKTEASSVSSSHVSPA. Over residues 334 to 354 the composition is skewed to low complexity; it reads ASTTASKTEASSVSSSHVSPA.

Belongs to the G-protein coupled receptor 1 family. Opsin subfamily. Phosphorylated on some or all of the serine and threonine residues present in the C-terminal region. In terms of processing, contains one covalently linked retinal chromophore.

The protein localises to the membrane. It is found in the cell projection. The protein resides in the cilium. Its subcellular location is the photoreceptor outer segment. Photoreceptor required for image-forming vision at low light intensity. While most salt water fish species use retinal as chromophore, most freshwater fish use 3-dehydroretinal, or a mixture of retinal and 3-dehydroretinal. Light-induced isomerization of 11-cis to all-trans retinal triggers a conformational change that activates signaling via G-proteins. Subsequent receptor phosphorylation mediates displacement of the bound G-protein alpha subunit by arrestin and terminates signaling. The polypeptide is Rhodopsin (rho) (Zeus faber (John Dory)).